A 371-amino-acid polypeptide reads, in one-letter code: tRNA-specific 2-thiouridylase MnmA (371 aa).

Residues Gly14–Ser21 and Met40 each bind ATP. An interaction with target base in tRNA region spans residues Asn100 to Asp102. Cys105 functions as the Nucleophile in the catalytic mechanism. Cys105 and Cys201 form a disulfide bridge. Gly129 serves as a coordination point for ATP. An interaction with tRNA region spans residues Lys151–Gln153. Cys201 functions as the Cysteine persulfide intermediate in the catalytic mechanism. The interaction with tRNA stretch occupies residues Arg309–Tyr310.

Belongs to the MnmA/TRMU family.

The protein localises to the cytoplasm. The catalysed reaction is S-sulfanyl-L-cysteinyl-[protein] + uridine(34) in tRNA + AH2 + ATP = 2-thiouridine(34) in tRNA + L-cysteinyl-[protein] + A + AMP + diphosphate + H(+). Functionally, catalyzes the 2-thiolation of uridine at the wobble position (U34) of tRNA, leading to the formation of s(2)U34. The protein is tRNA-specific 2-thiouridylase MnmA of Halalkalibacterium halodurans (strain ATCC BAA-125 / DSM 18197 / FERM 7344 / JCM 9153 / C-125) (Bacillus halodurans).